Here is a 226-residue protein sequence, read N- to C-terminus: 3-dehydroquinate dehydratase (226 aa).

3-dehydroquinate contacts are provided by residues serine 21, glutamate 42–arginine 44, and arginine 70. Histidine 124 (proton donor/acceptor) is an active-site residue. Lysine 149 serves as the catalytic Schiff-base intermediate with substrate. The 3-dehydroquinate site is built by arginine 187, threonine 206, and glutamine 210.

Belongs to the type-I 3-dehydroquinase family. In terms of assembly, homodimer.

The enzyme catalyses 3-dehydroquinate = 3-dehydroshikimate + H2O. The protein operates within metabolic intermediate biosynthesis; chorismate biosynthesis; chorismate from D-erythrose 4-phosphate and phosphoenolpyruvate: step 3/7. In terms of biological role, involved in the third step of the chorismate pathway, which leads to the biosynthesis of aromatic amino acids. Catalyzes the cis-dehydration of 3-dehydroquinate (DHQ) and introduces the first double bond of the aromatic ring to yield 3-dehydroshikimate. In Methanothrix thermoacetophila (strain DSM 6194 / JCM 14653 / NBRC 101360 / PT) (Methanosaeta thermophila), this protein is 3-dehydroquinate dehydratase.